The chain runs to 198 residues: Interferon gamma (198 aa).

An N-terminal signal peptide occupies residues 1–23 (MMVSTARAVVCLSLCLCVCQVRG). Residues Asn31, Asn42, and Asn174 are each glycosylated (N-linked (GlcNAc...) asparagine). The disordered stretch occupies residues 173-198 (SNNTKMQRRRRRRRRQARKVKTPTRA). A compositionally biased stretch (basic residues) spans 178 to 198 (MQRRRRRRRRQARKVKTPTRA).

The protein belongs to the type II (or gamma) interferon family. As to quaternary structure, homodimer.

The protein resides in the secreted. Its function is as follows. Cytokine which binds to interferon gamma receptor 1 (ifngr1). Also binds with lower affinity to interferon gamma receptor 1-like (ifngr1l). Has activating effects on macrophages and neutrophils. The chain is Interferon gamma from Paralichthys olivaceus (Bastard halibut).